Reading from the N-terminus, the 326-residue chain is tRNA-modifying protein YgfZ (326 aa).

Folate contacts are provided by tryptophan 27 and tryptophan 189.

It belongs to the tRNA-modifying YgfZ family.

It localises to the cytoplasm. In terms of biological role, folate-binding protein involved in regulating the level of ATP-DnaA and in the modification of some tRNAs. It is probably a key factor in regulatory networks that act via tRNA modification, such as initiation of chromosomal replication. This chain is tRNA-modifying protein YgfZ, found in Salmonella paratyphi A (strain AKU_12601).